The sequence spans 314 residues: tRNA dimethylallyltransferase 1 (314 aa).

Residue 17–24 (GPTAAGKT) participates in ATP binding. Residue 19 to 24 (TAAGKT) participates in substrate binding. The segment at 42–45 (DSRQ) is interaction with substrate tRNA.

It belongs to the IPP transferase family. In terms of assembly, monomer. Mg(2+) is required as a cofactor.

It catalyses the reaction adenosine(37) in tRNA + dimethylallyl diphosphate = N(6)-dimethylallyladenosine(37) in tRNA + diphosphate. Catalyzes the transfer of a dimethylallyl group onto the adenine at position 37 in tRNAs that read codons beginning with uridine, leading to the formation of N6-(dimethylallyl)adenosine (i(6)A). The sequence is that of tRNA dimethylallyltransferase 1 from Syntrophotalea carbinolica (strain DSM 2380 / NBRC 103641 / GraBd1) (Pelobacter carbinolicus).